Consider the following 82-residue polypeptide: Conotoxin C11GB (82 aa).

Residues 1–22 (MKLTCVMIVAVLFLTAWTVVTA) form the signal peptide. Residues 23 to 53 (EPHSSNVLENLYLKAHHEMENPEASKLNTRD) constitute a propeptide that is removed on maturation. Intrachain disulfides connect Cys55-Cys72, Cys62-Cys76, and Cys71-Cys80.

The protein belongs to the conotoxin O1 superfamily. Expressed by the venom duct.

The protein resides in the secreted. In Conus vexillum (Flag cone), this protein is Conotoxin C11GB.